The sequence spans 398 residues: uncharacterized protein (398 aa).

Lysine 212 is subject to N6-(pyridoxal phosphate)lysine.

The protein belongs to the trans-sulfuration enzymes family. Pyridoxal 5'-phosphate serves as cofactor.

This is an uncharacterized protein from Schizosaccharomyces pombe (strain 972 / ATCC 24843) (Fission yeast).